A 289-amino-acid polypeptide reads, in one-letter code: Light-independent protochlorophyllide reductase iron-sulfur ATP-binding protein (289 aa).

Residues 10-15 (GIGKST) and Lys-39 each bind ATP. Ser-14 provides a ligand contact to Mg(2+). [4Fe-4S] cluster contacts are provided by Cys-95 and Cys-129. 180 to 181 (NR) contributes to the ATP binding site.

Belongs to the NifH/BchL/ChlL family. In terms of assembly, homodimer. Protochlorophyllide reductase is composed of three subunits; ChlL, ChlN and ChlB. [4Fe-4S] cluster serves as cofactor.

It localises to the plastid. The protein resides in the chloroplast. The catalysed reaction is chlorophyllide a + oxidized 2[4Fe-4S]-[ferredoxin] + 2 ADP + 2 phosphate = protochlorophyllide a + reduced 2[4Fe-4S]-[ferredoxin] + 2 ATP + 2 H2O. It participates in porphyrin-containing compound metabolism; chlorophyll biosynthesis (light-independent). Functionally, component of the dark-operative protochlorophyllide reductase (DPOR) that uses Mg-ATP and reduced ferredoxin to reduce ring D of protochlorophyllide (Pchlide) to form chlorophyllide a (Chlide). This reaction is light-independent. The L component serves as a unique electron donor to the NB-component of the complex, and binds Mg-ATP. In Marchantia polymorpha (Common liverwort), this protein is Light-independent protochlorophyllide reductase iron-sulfur ATP-binding protein.